We begin with the raw amino-acid sequence, 706 residues long: Drebrin (706 aa).

An N-acetylalanine modification is found at alanine 2. In terms of domain architecture, ADF-H spans 3–134; sequence GVSFSGHRLE…DAGAIGQRLS (132 aa). Serine 141 and serine 142 each carry phosphoserine. Over residues 209 to 236 the composition is skewed to basic and acidic residues; the sequence is ERMEQERQEQEERERRYREREQQIEEHR. The segment at 209 to 497 is disordered; it reads ERMEQERQEQ…AEPAASVTSV (289 aa). Serine 241 bears the Phosphoserine mark. Basic and acidic residues predominate over residues 288–298; it reads DNPREFFRQQE. Residues 331-345 are compositionally biased toward low complexity; sequence SDSGPSSSSSSSSSP. The residue at position 344 (serine 344) is a Phosphoserine. Polar residues predominate over residues 357 to 366; it reads RTPNLSSSLP. Threonine 379 and threonine 383 each carry phosphothreonine. Positions 382–396 are enriched in polar residues; sequence PTRSPSDSSTASTPI. Phosphoserine is present on residues serine 385, serine 387, and serine 393. Threonine 394 bears the Phosphothreonine mark. Residues 411-422 show a composition bias toward pro residues; sequence QPPPPPPPPPPT. The segment covering 453–497 has biased composition (low complexity); that stretch reads AAEPPQAQEPPLLQSSPLEDSMCTESPEQAALAAPAEPAASVTSV. At serine 468 the chain carries Phosphoserine. Position 550 is a phosphothreonine (threonine 550). Positions 633 to 677 are disordered; sequence EPHLLTNGETTQKEGTQASEGYFSQSQEEEFAQSEEPCAKVPPPV. Polar residues predominate over residues 639-651; it reads NGETTQKEGTQAS. Position 658 is a phosphoserine (serine 658).

In terms of assembly, interacts with RUFY3. Interacts with CXCR4; this interaction is enhanced by antigenic stimulation. Interacts (via ADF-H domain) with ZMYND8 (via N-terminus); the interaction leads to sequestering of ZMYND8 in the cytoplasm. Expressed in the hippocampus, with expression in the pyramidal cells of CA1, CA2 and CA3 and in the granule cells of the dentate gyrus (at protein level). Highly expressed in brain, also present in stomach and to a lesser degree in kidney, colon, and urinary bladder. The E2 isoform is specifically expressed in adult stomach, kidney, and cultured cells.

It is found in the cytoplasm. It localises to the cell projection. Its subcellular location is the dendrite. The protein resides in the cell cortex. The protein localises to the cell junction. It is found in the growth cone. Functionally, actin cytoskeleton-organizing protein that plays a role in the formation of cell projections. Required for actin polymerization at immunological synapses (IS) and for the recruitment of the chemokine receptor CXCR4 to IS. Plays a role in dendritic spine morphogenesis and organization, including the localization of the dopamine receptor DRD1 to the dendritic spines. Involved in memory-related synaptic plasticity in the hippocampus. The sequence is that of Drebrin (Dbn1) from Mus musculus (Mouse).